Consider the following 148-residue polypeptide: Receptor activity-modifying protein 1 (148 aa).

A signal peptide spans 1–26 (MVRVLRGLPWRGLWLLLAHQLFLVTA). 3 disulfides stabilise this stretch: Cys-27–Cys-82, Cys-40–Cys-72, and Cys-57–Cys-104. The Extracellular segment spans residues 27-118 (CQDAHYGTLM…RALGDPPSTI (92 aa)). The chain crosses the membrane as a helical span at residues 119 to 140 (LCPFVVLPITVTLLVTALVVWR). Over 141–148 (SKRAESIV) the chain is Cytoplasmic.

It belongs to the RAMP family. As to quaternary structure, heterodimer of CALCRL and RAMP1; the interaction induces allosteric modulation of CALCRL function and CGRP1/CALCA and CGRP2/CALCB ligand specificity. Heterodimer of CALCR and RAMP1; interaction forms the AMYR1 receptor complex for amylin/IAPP and CGRP1/CALCA ligands.

The protein resides in the cell membrane. Functionally, accessory protein that interacts with and modulates the function of G-protein coupled receptors including calcitonin gene-related peptide type 1 receptor (CALCRL) and calcitonin receptor (CALCR). Required for the transport of CALCRL to the plasma membrane. Together with CALCRL, form the receptor complex for the calcitonin gene-related peptides CGRP1/CALCA and CGRP2/CALCB. Together with CALCR, form the AMYR1 receptor complex for amylin/IAPP and CGRP1/CALCA. This Cavia porcellus (Guinea pig) protein is Receptor activity-modifying protein 1 (RAMP1).